We begin with the raw amino-acid sequence, 619 residues long: Chaperone protein HscA homolog (619 aa).

It belongs to the heat shock protein 70 family.

Functionally, chaperone involved in the maturation of iron-sulfur cluster-containing proteins. Has a low intrinsic ATPase activity which is markedly stimulated by HscB. This is Chaperone protein HscA homolog from Pseudomonas aeruginosa (strain LESB58).